The primary structure comprises 341 residues: Anthranilate phosphoribosyltransferase (341 aa).

Residues Gly-79, 82–83, Thr-87, 89–92, 107–115, and Ser-119 each bind 5-phospho-alpha-D-ribose 1-diphosphate; these read GD, NIST, and KHGNRAVSS. Gly-79 contributes to the anthranilate binding site. Residue Ser-91 participates in Mg(2+) binding. Asn-110 contacts anthranilate. Arg-165 provides a ligand contact to anthranilate. Positions 224 and 225 each coordinate Mg(2+).

This sequence belongs to the anthranilate phosphoribosyltransferase family. As to quaternary structure, homodimer. The cofactor is Mg(2+).

It carries out the reaction N-(5-phospho-beta-D-ribosyl)anthranilate + diphosphate = 5-phospho-alpha-D-ribose 1-diphosphate + anthranilate. It participates in amino-acid biosynthesis; L-tryptophan biosynthesis; L-tryptophan from chorismate: step 2/5. Functionally, catalyzes the transfer of the phosphoribosyl group of 5-phosphorylribose-1-pyrophosphate (PRPP) to anthranilate to yield N-(5'-phosphoribosyl)-anthranilate (PRA). This Bacillus cereus (strain AH187) protein is Anthranilate phosphoribosyltransferase.